The following is a 473-amino-acid chain: 3-isopropylmalate dehydratase large subunit (473 aa).

3 residues coordinate [4Fe-4S] cluster: C348, C408, and C411.

Belongs to the aconitase/IPM isomerase family. LeuC type 1 subfamily. In terms of assembly, heterodimer of LeuC and LeuD. The cofactor is [4Fe-4S] cluster.

The enzyme catalyses (2R,3S)-3-isopropylmalate = (2S)-2-isopropylmalate. Its pathway is amino-acid biosynthesis; L-leucine biosynthesis; L-leucine from 3-methyl-2-oxobutanoate: step 2/4. Catalyzes the isomerization between 2-isopropylmalate and 3-isopropylmalate, via the formation of 2-isopropylmaleate. The polypeptide is 3-isopropylmalate dehydratase large subunit (Haloarcula marismortui (strain ATCC 43049 / DSM 3752 / JCM 8966 / VKM B-1809) (Halobacterium marismortui)).